Consider the following 251-residue polypeptide: Phosphate import ATP-binding protein PstB (251 aa).

The ABC transporter domain maps to 5 to 246 (IEIENFSAYY…PKNRLTEEYL (242 aa)). 37 to 44 (GPSGCGKT) is an ATP binding site.

This sequence belongs to the ABC transporter superfamily. Phosphate importer (TC 3.A.1.7) family. The complex is composed of two ATP-binding proteins (PstB), two transmembrane proteins (PstC and PstA) and a solute-binding protein (PstS).

The protein resides in the cell inner membrane. The catalysed reaction is phosphate(out) + ATP + H2O = ADP + 2 phosphate(in) + H(+). Its function is as follows. Part of the ABC transporter complex PstSACB involved in phosphate import. Responsible for energy coupling to the transport system. This chain is Phosphate import ATP-binding protein PstB, found in Thermotoga maritima (strain ATCC 43589 / DSM 3109 / JCM 10099 / NBRC 100826 / MSB8).